A 627-amino-acid polypeptide reads, in one-letter code: (-)-alpha-pinene synthase 1, chloroplastic (627 aa).

A chloroplast-targeting transit peptide spans 1-36; it reads MALVSIAPLASKSCLHKSLSSSAHELKTICRTIPTL. Mg(2+) contacts are provided by aspartate 378, aspartate 382, and aspartate 530. Positions 378–382 match the DDXXD motif motif; that stretch reads DDMYD.

The protein belongs to the terpene synthase family. Tpsd subfamily. Mg(2+) serves as cofactor. The cofactor is Mn(2+).

The protein localises to the plastid. It is found in the chloroplast. It carries out the reaction (2E)-geranyl diphosphate = (1S,5S)-beta-pinene + diphosphate. It catalyses the reaction (2E)-geranyl diphosphate = (1S,5S)-alpha-pinene + diphosphate. It functions in the pathway terpene metabolism; oleoresin biosynthesis. Terpene synthase (TPS) involved in the biosynthesis of monoterpene natural products included in conifer oleoresin secretions and volatile emissions; these compounds contribute to biotic and abiotic stress defense against herbivores and pathogens. Catalyzes the conversion of (2E)-geranyl diphosphate (GPP) to (1S,5S)-beta-pinene. This Picea sitchensis (Sitka spruce) protein is (-)-alpha-pinene synthase 1, chloroplastic.